The following is a 1161-amino-acid chain: Nardilysin (1161 aa).

Residues methionine 1–arginine 18 form the signal peptide. Disordered stretches follow at residues lysine 42–serine 105 and valine 130–threonine 218. Phosphoserine occurs at positions 85, 91, and 93. The segment covering threonine 138–glutamate 209 has biased composition (acidic residues). Residue histidine 244 participates in Zn(2+) binding. The active-site Proton acceptor is the glutamate 247. Residues histidine 248 and glutamate 325 each coordinate Zn(2+).

The protein belongs to the peptidase M16 family. Interacts with BACE1 and NRG1. It depends on Zn(2+) as a cofactor. Testis, and in a lower level in brain, heart and adrenal glands.

The protein resides in the mitochondrion. It localises to the cell projection. Its subcellular location is the dendrite. It catalyses the reaction Hydrolysis of polypeptides, preferably at -Xaa-|-Arg-Lys-, and less commonly at -Arg-|-Arg-Xaa-, in which Xaa is not Arg or Lys.. In terms of biological role, cleaves peptide substrates on the N-terminus of arginine residues in dibasic pairs. Is a critical activator of BACE1- and ADAM17-mediated pro-neuregulin ectodomain shedding, involved in the positive regulation of axonal maturation and myelination. Required for proper functioning of 2-oxoglutarate dehydrogenase (OGDH). This is Nardilysin from Rattus norvegicus (Rat).